A 129-amino-acid polypeptide reads, in one-letter code: Small ribosomal subunit protein uS11 (129 aa).

The protein belongs to the universal ribosomal protein uS11 family. In terms of assembly, part of the 30S ribosomal subunit. Interacts with proteins S7 and S18. Binds to IF-3.

In terms of biological role, located on the platform of the 30S subunit, it bridges several disparate RNA helices of the 16S rRNA. Forms part of the Shine-Dalgarno cleft in the 70S ribosome. The chain is Small ribosomal subunit protein uS11 from Rhodopseudomonas palustris (strain BisB18).